We begin with the raw amino-acid sequence, 170 residues long: Macro domain-containing protein DR_2288 (170 aa).

The Macro domain occupies 1 to 170; sequence MPLELVQGDI…HVFERALAQL (170 aa).

This sequence belongs to the MacroD-type family.

The protein is Macro domain-containing protein DR_2288 of Deinococcus radiodurans (strain ATCC 13939 / DSM 20539 / JCM 16871 / CCUG 27074 / LMG 4051 / NBRC 15346 / NCIMB 9279 / VKM B-1422 / R1).